The sequence spans 457 residues: Adenylosuccinate synthetase isozyme 1 (457 aa).

The tract at residues 1 to 25 is disordered; the sequence is MSGTRASNDRPPSAGGVKRGRLQHE. Residues 42 to 48 and 70 to 72 contribute to the GTP site; these read GDEGKGK and GHT. The Proton acceptor role is filled by Asp43. Residues Asp43 and Gly70 each contribute to the Mg(2+) site. Residue Asp43 participates in substrate binding. IMP contacts are provided by residues 43–46, 68–71, Thr163, Arg177, Asn256, Thr271, and Arg335; these read DEGK and NAGH. Residue His71 is the Proton donor of the active site. Position 331–337 (331–337) interacts with substrate; sequence VTTGRKR. Residues Arg337, 363–365, and 445–448 contribute to the GTP site; these read KLD and GVGK.

Belongs to the adenylosuccinate synthetase family. Homodimer. It depends on Mg(2+) as a cofactor. Predominantly expressed in the striated muscle tissues.

It is found in the cytoplasm. The catalysed reaction is IMP + L-aspartate + GTP = N(6)-(1,2-dicarboxyethyl)-AMP + GDP + phosphate + 2 H(+). Its pathway is purine metabolism; AMP biosynthesis via de novo pathway; AMP from IMP: step 1/2. In terms of biological role, component of the purine nucleotide cycle (PNC), which interconverts IMP and AMP to regulate the nucleotide levels in various tissues, and which contributes to glycolysis and ammoniagenesis. Catalyzes the first committed step in the biosynthesis of AMP from IMP. The polypeptide is Adenylosuccinate synthetase isozyme 1 (Sus scrofa (Pig)).